A 554-amino-acid chain; its full sequence is Glucose-6-phosphate isomerase 1 (554 aa).

The Proton donor role is filled by Glu-359. Residues His-390 and Lys-518 contribute to the active site.

It belongs to the GPI family.

The protein localises to the cytoplasm. The enzyme catalyses alpha-D-glucose 6-phosphate = beta-D-fructose 6-phosphate. The protein operates within carbohydrate biosynthesis; gluconeogenesis. Its pathway is carbohydrate degradation; glycolysis; D-glyceraldehyde 3-phosphate and glycerone phosphate from D-glucose: step 2/4. In terms of biological role, catalyzes the reversible isomerization of glucose-6-phosphate to fructose-6-phosphate. The polypeptide is Glucose-6-phosphate isomerase 1 (Pseudomonas putida (strain ATCC 47054 / DSM 6125 / CFBP 8728 / NCIMB 11950 / KT2440)).